A 362-amino-acid chain; its full sequence is Biotin synthase (362 aa).

The Radical SAM core domain maps to 39-267; sequence NVVQVSTLLS…ETQVRLSAGR (229 aa). Residues Cys54, Cys58, and Cys61 each coordinate [4Fe-4S] cluster. Positions 98, 130, 190, and 262 each coordinate [2Fe-2S] cluster. A disordered region spans residues 317 to 362; the sequence is PFTKVSQPTTVEAKDSRYESLGEKPKWSRPSHTIEKNLELSGKGKN. The span at 328–354 shows a compositional bias: basic and acidic residues; sequence EAKDSRYESLGEKPKWSRPSHTIEKNL.

This sequence belongs to the radical SAM superfamily. Biotin synthase family. As to quaternary structure, homodimer. It depends on [4Fe-4S] cluster as a cofactor. Requires [2Fe-2S] cluster as cofactor.

The catalysed reaction is (4R,5S)-dethiobiotin + (sulfur carrier)-SH + 2 reduced [2Fe-2S]-[ferredoxin] + 2 S-adenosyl-L-methionine = (sulfur carrier)-H + biotin + 2 5'-deoxyadenosine + 2 L-methionine + 2 oxidized [2Fe-2S]-[ferredoxin]. The protein operates within cofactor biosynthesis; biotin biosynthesis; biotin from 7,8-diaminononanoate: step 2/2. Functionally, catalyzes the conversion of dethiobiotin (DTB) to biotin by the insertion of a sulfur atom into dethiobiotin via a radical-based mechanism. This is Biotin synthase from Flavobacterium psychrophilum (strain ATCC 49511 / DSM 21280 / CIP 103535 / JIP02/86).